We begin with the raw amino-acid sequence, 154 residues long: Superoxide dismutase [Cu-Zn] (154 aa).

Residue K19 forms a Glycyl lysine isopeptide (Lys-Gly) (interchain with G-Cter in SUMO) linkage. Residues S26 and S39 each carry the phosphoserine modification. E43 lines the Zn(2+) pocket. H47, H49, and H64 together coordinate Cu cation. The cysteines at positions 58 and 147 are disulfide-linked. H64 is a binding site for Zn(2+). A Glycyl lysine isopeptide (Lys-Gly) (interchain with G-Cter in SUMO) cross-link involves residue K70. H72, H81, and D84 together coordinate Zn(2+). Phosphoserine is present on residues S99 and S117. Cu cation is bound at residue H121. T132 and T138 each carry phosphothreonine. Substrate is bound at residue R144.

It belongs to the Cu-Zn superoxide dismutase family. In terms of assembly, homodimer in holo form. In apo form, heterodimer with CCS1. Zinc-binding at 'His-16' of CCS1 and Glu-43 of apo-SOD1 is required for this heterodimerization. The cofactor is Cu cation. It depends on Zn(2+) as a cofactor.

The protein localises to the cytoplasm. It localises to the mitochondrion intermembrane space. The catalysed reaction is 2 superoxide + 2 H(+) = H2O2 + O2. Its function is as follows. Destroys radicals which are normally produced within the cells and which are toxic to biological systems. This Saccharomyces cerevisiae (strain ATCC 204508 / S288c) (Baker's yeast) protein is Superoxide dismutase [Cu-Zn].